A 254-amino-acid chain; its full sequence is Triosephosphate isomerase, cytosolic (254 aa).

Substrate contacts are provided by Asn10 and Lys12. His96 acts as the Electrophile in catalysis. Residue Glu166 is the Proton acceptor of the active site.

The protein belongs to the triosephosphate isomerase family. Homodimer.

It localises to the cytoplasm. The enzyme catalyses D-glyceraldehyde 3-phosphate = dihydroxyacetone phosphate. It participates in carbohydrate biosynthesis; gluconeogenesis. It functions in the pathway carbohydrate degradation; glycolysis; D-glyceraldehyde 3-phosphate from glycerone phosphate: step 1/1. In Petunia hybrida (Petunia), this protein is Triosephosphate isomerase, cytosolic (TPIP1).